Here is a 412-residue protein sequence, read N- to C-terminus: Protein trichome birefringence-like 13 (412 aa).

Residues proline 9–leucine 29 traverse the membrane as a helical; Signal-anchor for type II membrane protein segment. The GDS motif signature appears at glycine 137–serine 139. The DCXHWCLPGXXDXWN motif signature appears at aspartate 385–asparagine 399.

Belongs to the PC-esterase family. TBL subfamily.

It is found in the membrane. In terms of biological role, may act as a bridging protein that binds pectin and other cell wall polysaccharides. Probably involved in maintaining esterification of pectins. May be involved in the specific O-acetylation of cell wall polymers. This Arabidopsis thaliana (Mouse-ear cress) protein is Protein trichome birefringence-like 13 (TBL13).